We begin with the raw amino-acid sequence, 206 residues long: Small ribosomal subunit protein uS4 (206 aa).

The S4 RNA-binding domain maps to 96-156; sequence GRLDNVVYRM…EKSKKQARIK (61 aa).

The protein belongs to the universal ribosomal protein uS4 family. As to quaternary structure, part of the 30S ribosomal subunit. Contacts protein S5. The interaction surface between S4 and S5 is involved in control of translational fidelity.

Functionally, one of the primary rRNA binding proteins, it binds directly to 16S rRNA where it nucleates assembly of the body of the 30S subunit. In terms of biological role, with S5 and S12 plays an important role in translational accuracy. The protein is Small ribosomal subunit protein uS4 of Mannheimia succiniciproducens (strain KCTC 0769BP / MBEL55E).